The primary structure comprises 356 residues: Phosphoribosylformylglycinamidine cyclo-ligase (356 aa).

Belongs to the AIR synthase family.

Its subcellular location is the cytoplasm. The catalysed reaction is 2-formamido-N(1)-(5-O-phospho-beta-D-ribosyl)acetamidine + ATP = 5-amino-1-(5-phospho-beta-D-ribosyl)imidazole + ADP + phosphate + H(+). It participates in purine metabolism; IMP biosynthesis via de novo pathway; 5-amino-1-(5-phospho-D-ribosyl)imidazole from N(2)-formyl-N(1)-(5-phospho-D-ribosyl)glycinamide: step 2/2. The chain is Phosphoribosylformylglycinamidine cyclo-ligase from Sinorhizobium medicae (strain WSM419) (Ensifer medicae).